The primary structure comprises 167 residues: Photosystem I assembly protein Ycf3 (167 aa).

TPR repeat units follow at residues 35–68 (AFTY…EIDP), 72–105 (SYIL…NPSL), and 120–153 (GEQA…APSN).

It belongs to the Ycf3 family.

The protein localises to the plastid. It is found in the chloroplast thylakoid membrane. Essential for the assembly of the photosystem I (PSI) complex. May act as a chaperone-like factor to guide the assembly of the PSI subunits. The chain is Photosystem I assembly protein Ycf3 from Marchantia polymorpha (Common liverwort).